The sequence spans 91 residues: Lipolysis-activating peptide 1-alpha chain (91 aa).

The N-terminal stretch at 1–22 (MMKLVLFGIIVILFSLIGSIHG) is a signal peptide. The region spanning 24 to 87 (SGNYPLNPYG…VWNAVKKHCK (64 aa)) is the LCN-type CS-alpha/beta domain. 3 disulfides stabilise this stretch: C38–C61, C47–C66, and C51–C68.

The protein belongs to the long (3 C-C) scorpion toxin superfamily. As to quaternary structure, monomer (edited version) and heterodimer (non-edited version) of this alpha chain and a beta chain (AC P84809). In terms of tissue distribution, expressed by the venom gland.

It is found in the secreted. In terms of biological role, the heterodimer non-edited LVP1 induces lipolysis in rat adipocytes. Induction of lipolysis by LVP1 appears to be mediated through the beta-2 adrenergic receptor pathway (ADRB2). Intracerebroventricular injection is not toxic to mice. Its function is as follows. The edited BmKBTx-like, similar to beta-toxins, may modulate voltage-gated sodium channels (Nav) and may block voltage-gated potassium channels (Kv). This chain is Lipolysis-activating peptide 1-alpha chain, found in Buthus occitanus tunetanus (Common European scorpion).